Reading from the N-terminus, the 482-residue chain is MSPTTPADQAKKLIKVPEMRRIKHIYFVGIGGAGMCGIAEVLKNQGYKVSGSDIKASKTTAHLEQKGIKVYIGHTADNLKAVDVLVVSTAIDPENPEVKAAIENRIPVVRRAEMLGELMRYRHGIAVAGTHGKTTTTSLLTTMLAEENMDPTYVIGGLLNRTGVNAALGASRFIVAEADESDASFLYLQPMAAIITNVDADHMDTYGGSFDKLKDTFVEFIHRLPFYGLAVVCGDDHNVREIMPRFGRPTLTYGFNEDNDIRAVDVVQEGMQSHFTVLRKDREPLRLTVNQPGLHNILNALAAIGVATDEGVSDAAIARALEGFSGVGRRFQVQGEFELGEGSVKLVDDYGHHPKEVEATIKAARQSHPDRRLVMMFQPHRFSRTRDCFDDFVEVLSQVDQLLLLEVYPAGEKPIVGADSRTLARSIRLRGDVEPILVDPVEGNLPNIIQKVLQPNDLLLTQGAGNVGAISVDLAQQQLYLK.

Residue 129 to 135 (GTHGKTT) participates in ATP binding.

It belongs to the MurCDEF family.

The protein resides in the cytoplasm. It carries out the reaction UDP-N-acetyl-alpha-D-muramate + L-alanine + ATP = UDP-N-acetyl-alpha-D-muramoyl-L-alanine + ADP + phosphate + H(+). It functions in the pathway cell wall biogenesis; peptidoglycan biosynthesis. In terms of biological role, cell wall formation. The sequence is that of UDP-N-acetylmuramate--L-alanine ligase from Acinetobacter baylyi (strain ATCC 33305 / BD413 / ADP1).